Here is a 282-residue protein sequence, read N- to C-terminus: Bis(5'-nucleosyl)-tetraphosphatase, symmetrical (282 aa).

This sequence belongs to the Ap4A hydrolase family.

It catalyses the reaction P(1),P(4)-bis(5'-adenosyl) tetraphosphate + H2O = 2 ADP + 2 H(+). Its function is as follows. Hydrolyzes diadenosine 5',5'''-P1,P4-tetraphosphate to yield ADP. This chain is Bis(5'-nucleosyl)-tetraphosphatase, symmetrical, found in Burkholderia mallei (strain NCTC 10247).